A 402-amino-acid polypeptide reads, in one-letter code: S-adenosylmethionine synthase (402 aa).

Residue histidine 16 coordinates ATP. Aspartate 18 provides a ligand contact to Mg(2+). K(+) is bound at residue glutamate 44. L-methionine contacts are provided by glutamate 57 and glutamine 103. The flexible loop stretch occupies residues 103–113 (QSPDIAQGVDT). ATP-binding positions include 178-180 (DGK), 249-250 (KF), aspartate 258, 264-265 (RK), alanine 281, and lysine 285. Aspartate 258 contacts L-methionine. Position 289 (lysine 289) interacts with L-methionine.

The protein belongs to the AdoMet synthase family. Homotetramer; dimer of dimers. Mg(2+) serves as cofactor. Requires K(+) as cofactor.

The protein localises to the cytoplasm. The catalysed reaction is L-methionine + ATP + H2O = S-adenosyl-L-methionine + phosphate + diphosphate. Its pathway is amino-acid biosynthesis; S-adenosyl-L-methionine biosynthesis; S-adenosyl-L-methionine from L-methionine: step 1/1. In terms of biological role, catalyzes the formation of S-adenosylmethionine (AdoMet) from methionine and ATP. The overall synthetic reaction is composed of two sequential steps, AdoMet formation and the subsequent tripolyphosphate hydrolysis which occurs prior to release of AdoMet from the enzyme. The sequence is that of S-adenosylmethionine synthase from Mycolicibacterium vanbaalenii (strain DSM 7251 / JCM 13017 / BCRC 16820 / KCTC 9966 / NRRL B-24157 / PYR-1) (Mycobacterium vanbaalenii).